A 300-amino-acid chain; its full sequence is Ribosomal RNA small subunit methyltransferase H (300 aa).

Residues 38 to 40, glutamate 55, isoleucine 85, aspartate 102, and histidine 109 contribute to the S-adenosyl-L-methionine site; that span reads GGH.

Belongs to the methyltransferase superfamily. RsmH family.

The protein resides in the cytoplasm. The catalysed reaction is cytidine(1402) in 16S rRNA + S-adenosyl-L-methionine = N(4)-methylcytidine(1402) in 16S rRNA + S-adenosyl-L-homocysteine + H(+). Its function is as follows. Specifically methylates the N4 position of cytidine in position 1402 (C1402) of 16S rRNA. In Brachyspira hyodysenteriae (strain ATCC 49526 / WA1), this protein is Ribosomal RNA small subunit methyltransferase H.